A 244-amino-acid chain; its full sequence is Probable transcriptional regulatory protein DR_2548 (244 aa).

The tract at residues 1-23 is disordered; that stretch reads MAGHSKWAQIKRKKGANDKKRSA.

It belongs to the TACO1 family.

It is found in the cytoplasm. The polypeptide is Probable transcriptional regulatory protein DR_2548 (Deinococcus radiodurans (strain ATCC 13939 / DSM 20539 / JCM 16871 / CCUG 27074 / LMG 4051 / NBRC 15346 / NCIMB 9279 / VKM B-1422 / R1)).